Here is a 168-residue protein sequence, read N- to C-terminus: Probable chemoreceptor glutamine deamidase CheD 2 (168 aa).

Belongs to the CheD family.

The catalysed reaction is L-glutaminyl-[protein] + H2O = L-glutamyl-[protein] + NH4(+). Functionally, probably deamidates glutamine residues to glutamate on methyl-accepting chemotaxis receptors (MCPs), playing an important role in chemotaxis. This is Probable chemoreceptor glutamine deamidase CheD 2 from Leptospira interrogans serogroup Icterohaemorrhagiae serovar copenhageni (strain Fiocruz L1-130).